The primary structure comprises 67 residues: MIEVVCNDRLGNKVRVKVNSDDTIGDLKKVLSAQIGIKAEKIRLQKSYSIFKDHEIHDGDGLELYYN.

Residues 2–67 (IEVVCNDRLG…DGDGLELYYN (66 aa)) form the Ubiquitin-like domain.

The protein resides in the cytoplasm. The polypeptide is Ubiquitin-like protein 5 (ubl5) (Dictyostelium discoideum (Social amoeba)).